A 1019-amino-acid polypeptide reads, in one-letter code: Vacuolar membrane protease (1019 aa).

The Cytoplasmic segment spans residues 1 to 69 (MFLEINFYST…DRIPTVVGFR (69 aa)). The chain crosses the membrane as a helical span at residues 70–90 (VIPTTVLVLLTYLTIFTLVIV). Residues 91 to 404 (TDWLPEPPKN…AELVIFYLND (314 aa)) are Vacuolar-facing. A glycan (N-linked (GlcNAc...) asparagine) is linked at asparagine 158. Zn(2+) is bound by residues histidine 195 and aspartate 207. The Proton acceptor role is filled by glutamate 239. Glutamate 240 lines the Zn(2+) pocket. Asparagine 256 carries N-linked (GlcNAc...) asparagine glycosylation. The Zn(2+) site is built by glutamate 265 and histidine 341. A helical transmembrane segment spans residues 405–425 (LLIYNVVSLVVGPISLIFFVV). At 426–466 (CEYVLRNERARQPNGHPVSRPSVLEWLKQRSWLRALWRRSK) the chain is on the cytoplasmic side. A helical transmembrane segment spans residues 467 to 487 (FWIALVITIALQALLVWGYLA). Over 488 to 497 (FNSFTVYSSP) the chain is Vacuolar. A helical membrane pass occupies residues 498–518 (YLVLISFFSLAYLSLVIPLTF). Residues 519-539 (TFNQTQSPTAKYIAPEREKHT) lie on the Cytoplasmic side of the membrane. The chain crosses the membrane as a helical span at residues 540–560 (LLIQVYIFTWILLLFSTIAVA). At 561–565 (RAQVG) the chain is on the vacuolar side. Residues 566-586 (GLYFVTAWNTGVWIACLLAAV) traverse the membrane as a helical segment. The Cytoplasmic segment spans residues 587-651 (EGMMLPVPQG…ASLRKPQEGG (65 aa)). The segment at 603-634 (HSAHHHHHHEHEEDQDADDDDREQRQPPTEAT) is disordered. A helical membrane pass occupies residues 652 to 672 (VVGWWIVHLLLTIPAPVLLIA). Residues 673–692 (QMGSLLLDSLPQTLADGSPA) are Vacuolar-facing. Residues 693 to 713 (YVVYAAASLTAVLLAVPLTPF) traverse the membrane as a helical segment. Residues 714 to 719 (SGKLHR) lie on the Cytoplasmic side of the membrane. Residues 720–740 (GLFFLFFLSFLIVTAYLWLAF) traverse the membrane as a helical segment. Residues 741-1019 (PFSSADPLKV…LVEAWSPFSV (279 aa)) are Vacuolar-facing. A glycan (N-linked (GlcNAc...) asparagine) is linked at asparagine 774.

Belongs to the peptidase M28 family. Zn(2+) serves as cofactor.

It localises to the vacuole membrane. May be involved in vacuolar sorting and osmoregulation. The sequence is that of Vacuolar membrane protease from Laccaria bicolor (strain S238N-H82 / ATCC MYA-4686) (Bicoloured deceiver).